The sequence spans 708 residues: Leukotoxin translocation ATP-binding protein LktB (708 aa).

The region spanning 1 to 126 (MEANHQRNDL…ACYQGQLILV (126 aa)) is the Peptidase C39 domain. The region spanning 155–437 (FLETLIVSIF…LAQLWQDFQQ (283 aa)) is the ABC transmembrane type-1 domain. Transmembrane regions (helical) follow at residues 159–179 (LIVS…FQVV), 192–212 (LNII…LSGL), 270–290 (ALTS…MWYY), 296–316 (LVIL…SPIL), and 389–409 (VMVI…LSIG). Residues 469–704 (IAFKNIRFRY…SNGLYSYLHQ (236 aa)) enclose the ABC transporter domain. An ATP-binding site is contributed by 503-510 (GRSGSGKS).

The protein belongs to the ABC transporter superfamily. Protein-1 exporter (TC 3.A.1.109) family. Homodimer.

It localises to the cell inner membrane. The catalysed reaction is ATP + H2O + proteinSide 1 = ADP + phosphate + proteinSide 2.. Its function is as follows. Part of the ABC transporter complex LktBD involved in leukotoxin export. Transmembrane domains (TMD) form a pore in the inner membrane and the ATP-binding domain (NBD) is responsible for energy generation. This chain is Leukotoxin translocation ATP-binding protein LktB (lktB), found in Mannheimia glucosida.